The chain runs to 424 residues: Argininosuccinate synthase (424 aa).

ATP-binding positions include 9–17 (AYSGGLDTS) and Ala35. The L-citrulline site is built by Tyr86 and Ser91. 114 to 122 (SHGATGKGN) is a binding site for ATP. The L-aspartate site is built by Thr118, Asn122, and Asp123. Residue Asn122 participates in L-citrulline binding. Arg126, Ser179, Ser188, Glu269, and Tyr281 together coordinate L-citrulline.

This sequence belongs to the argininosuccinate synthase family. As to quaternary structure, homotetramer.

The catalysed reaction is L-citrulline + L-aspartate + ATP = 2-(N(omega)-L-arginino)succinate + AMP + diphosphate + H(+). The protein operates within amino-acid biosynthesis; L-arginine biosynthesis; L-arginine from L-ornithine and carbamoyl phosphate: step 2/3. It functions in the pathway nitrogen metabolism; urea cycle; (N(omega)-L-arginino)succinate from L-aspartate and L-citrulline: step 1/1. In Anopheles gambiae (African malaria mosquito), this protein is Argininosuccinate synthase.